The chain runs to 290 residues: MAKHLALSVAAAVAVSWLAASSAAAAGFYEKFDVVGAGDHVRVVSDDGKTQQVALTLDRSSGSGFTSKDTYLFGEFSVQMKLVGGNSAGTVTSFYLSSGEGDGHDEIDIEFMGNLSGNPYVMNTNVWANGDGKKEHQFYLWFDPTADFHTYKIIWNPQNIIFQVDDVPVRTFKKYDDLAYPQSKPMRLHATLWDGSYWATRHGDVKIDWSGAPFVVSYRGYSTNACVNNNPAGGWSSSWCPEGTSAWIHRELDGAELGTVAWAERNYMSYNYCADGWRFPQGFPAECYRK.

Residues 1 to 25 (MAKHLALSVAAAVAVSWLAASSAAA) form the signal peptide. In terms of domain architecture, GH16 spans 26–218 (AGFYEKFDVV…WSGAPFVVSY (193 aa)). Residue Glu106 is the Nucleophile of the active site. Glu110 serves as the catalytic Proton donor. Position 110 (Glu110) interacts with xyloglucan. N-linked (GlcNAc...) asparagine glycosylation occurs at Asn114. Xyloglucan is bound by residues 123–125 (NTN), 133–135 (KKE), and 197–198 (YW). 2 cysteine pairs are disulfide-bonded: Cys226–Cys240 and Cys273–Cys287. Arg278 is a binding site for xyloglucan.

This sequence belongs to the glycosyl hydrolase 16 family. XTH group 2 subfamily. Contains at least one intrachain disulfide bond essential for its enzymatic activity. In terms of tissue distribution, transcript strongly detected in leaf sheaths. Weakly or not expressed in leaf blades, roots and calli. Accumulation of transcript detected in shoot apex meristem, vascular tissues, young leaves, vascular bundles of leaf sheaths, and peripheral cylinder of the vascular bundles and fibers in the nodal region.

The protein localises to the secreted. Its subcellular location is the cell wall. It is found in the extracellular space. It localises to the apoplast. The enzyme catalyses breaks a beta-(1-&gt;4) bond in the backbone of a xyloglucan and transfers the xyloglucanyl segment on to O-4 of the non-reducing terminal glucose residue of an acceptor, which can be a xyloglucan or an oligosaccharide of xyloglucan.. Functionally, catalyzes xyloglucan endohydrolysis (XEH) and/or endotransglycosylation (XET). Cleaves and religates xyloglucan polymers, an essential constituent of the primary cell wall, and thereby participates in cell wall construction of growing tissues. May promote elongation of three internodes (II, III and IV) and may be involved in cell elongation processes. The polypeptide is Xyloglucan endotransglycosylase/hydrolase protein 8 (XTH8) (Oryza sativa subsp. japonica (Rice)).